Here is a 74-residue protein sequence, read N- to C-terminus: Putative defensin-like protein 128 (74 aa).

The first 24 residues, 1 to 24, serve as a signal peptide directing secretion; that stretch reads MSKLTNVVIFIVFFLGMMAKETQG. 4 disulfides stabilise this stretch: Cys28–Cys72, Cys37–Cys56, Cys42–Cys66, and Cys46–Cys68.

Belongs to the DEFL family.

It localises to the secreted. This is Putative defensin-like protein 128 (LCR8) from Arabidopsis thaliana (Mouse-ear cress).